We begin with the raw amino-acid sequence, 903 residues long: Envelope glycoprotein B (903 aa).

A signal peptide spans 1–29; that stretch reads MRQGAARGCRWFVVWALLGLTLGVLVASA. Positions 30-51 are enriched in low complexity; the sequence is APSSPGTPGVAAATQAANGGPA. Residues 30 to 87 form a disordered region; that stretch reads APSSPGTPGVAAATQAANGGPATPAPPAPGPAPTGDTKPKKNKKPKNPPPPRPAGDNA. Residues 30–773 are Virion surface-facing; that stretch reads APSSPGTPGV…SGVSSFMSNP (744 aa). Residues 52 to 61 show a composition bias toward pro residues; the sequence is TPAPPAPGPA. N86 and N140 each carry an N-linked (GlcNAc...) asparagine; by host glycan. 5 disulfide bridges follow: C115–C572, C132–C528, C206–C270, C363–C411, and C595–C632. Involved in fusion and/or binding to host membrane stretches follow at residues 172 to 178 and 257 to 264; these read VWFGHRY and RVEAFHRY. N-linked (GlcNAc...) asparagine; by host glycosylation is found at N397 and N429. Positions 469–491 are disordered; sequence REQSRKPPNPTPPPPGASANASV. Residues 475-484 show a composition bias toward pro residues; that stretch reads PPNPTPPPPG. N488 is a glycosylation site (N-linked (GlcNAc...) asparagine; by host). The N-linked (GlcNAc...) asparagine; by host glycan is linked to N673. The segment at 718–771 is hydrophobic membrane proximal region; sequence IDTVIHADANAAMFAGLGAFFEGMGDLGRAVGKVVMGIVGGVVSAVSGVSSFMS. Residues 774-794 traverse the membrane as a helical segment; the sequence is FGALAVGLLVLAGLAAAFFAF. Residues 795-903 are Intravirion-facing; sequence RYVMRLQSNP…KDGDADEDDL (109 aa). The Golgi targeting motif lies at 848-851; it reads YMAL. The segment at 882 to 903 is disordered; that stretch reads KRRNTNYTQVPNKDGDADEDDL. Positions 888–891 match the Internalization motif motif; sequence YTQV.

This sequence belongs to the herpesviridae glycoprotein B family. As to quaternary structure, homotrimer; disulfide-linked. Interacts with host receptor MYH9/NMMHC-IIA. Interacts with host receptor MYH10/NMMHC-IIB. Interacts with the host coreceptor PILRA. Binds to heparan sulfate proteoglycans. Interacts with gH/gL heterodimer. Interacts with gD. In terms of processing, the cytoplasmic tail is phosphorylated by the viral kinase US3. Phosphorylation may be linked to a down-regulation of gB expression on cell surface. Ubiquitinated.

The protein resides in the virion membrane. It localises to the host cell membrane. The protein localises to the host endosome membrane. Its subcellular location is the host Golgi apparatus membrane. In terms of biological role, envelope glycoprotein that forms spikes at the surface of virion envelope and binds to the host cell entry receptors MYH9/NMMHC-IIA and MYH10/NMMHC-IIB, promoting the virus entry into host cells. Essential for the initial attachment to heparan sulfate moieties of the host cell surface proteoglycans. Involved in fusion of viral and cellular membranes leading to virus entry into the host cell: following initial binding to its host cell entry receptors, membrane fusion is mediated by the fusion machinery composed at least of gB and the heterodimer gH/gL. May be involved in the fusion between the virion envelope and the outer nuclear membrane during virion egress. Also plays a role, together with gK, in virus-induced cell-to-cell fusion (syncytia formation). The protein is Envelope glycoprotein B of Homo sapiens (Human).